The sequence spans 124 residues: Small ribosomal subunit protein uS12 (124 aa).

Residue Asp-89 is modified to 3-methylthioaspartic acid.

It belongs to the universal ribosomal protein uS12 family. As to quaternary structure, part of the 30S ribosomal subunit. Contacts proteins S8 and S17. May interact with IF1 in the 30S initiation complex.

With S4 and S5 plays an important role in translational accuracy. Its function is as follows. Interacts with and stabilizes bases of the 16S rRNA that are involved in tRNA selection in the A site and with the mRNA backbone. Located at the interface of the 30S and 50S subunits, it traverses the body of the 30S subunit contacting proteins on the other side and probably holding the rRNA structure together. The combined cluster of proteins S8, S12 and S17 appears to hold together the shoulder and platform of the 30S subunit. This is Small ribosomal subunit protein uS12 from Mannheimia succiniciproducens (strain KCTC 0769BP / MBEL55E).